A 759-amino-acid chain; its full sequence is Mitogen-activated protein kinase kinase kinase 1a (759 aa).

Composition is skewed to basic and acidic residues over residues 1-17 (MIEE…DRGS), 25-36 (SFEDKGSSHDWK), and 52-64 (AKKD…KVDS). Disordered stretches follow at residues 1–90 (MIEE…NLSK), 122–160 (LGIE…SHDF), 165–184 (SRVD…LAPM), and 195–239 (RKHR…PDPL). Residues 72–85 (VHSTSSPRLSPASS) are compositionally biased toward low complexity. The Protein kinase domain occupies 426-679 (WAKGEFLGSG…CDMLLAHPFI (254 aa)). ATP-binding positions include 432 to 440 (LGSGTFGSV) and Lys-454. Asp-549 acts as the Proton acceptor in catalysis.

Belongs to the protein kinase superfamily. STE Ser/Thr protein kinase family. MAP kinase kinase kinase subfamily.

The protein localises to the cell membrane. The enzyme catalyses L-seryl-[protein] + ATP = O-phospho-L-seryl-[protein] + ADP + H(+). The catalysed reaction is L-threonyl-[protein] + ATP = O-phospho-L-threonyl-[protein] + ADP + H(+). Functionally, the CERK1, MEKK1a/b, MKK1a/b/c and MPK4a/b proteins are involved in pathogen defense. The pathway induces rapid growth inhibition, cell wall depositions and accumulation of defense-related transcripts. This protein is required for responses to chitin and acts redundantly with MEKK1b. This Physcomitrium patens (Spreading-leaved earth moss) protein is Mitogen-activated protein kinase kinase kinase 1a.